The primary structure comprises 614 residues: Dihydroxy-acid dehydratase (614 aa).

D81 contacts Mg(2+). C122 contacts [2Fe-2S] cluster. D123 and K124 together coordinate Mg(2+). The residue at position 124 (K124) is an N6-carboxylysine. C193 is a [2Fe-2S] cluster binding site. E489 is a binding site for Mg(2+). S515 acts as the Proton acceptor in catalysis.

Belongs to the IlvD/Edd family. In terms of assembly, homodimer. The cofactor is [2Fe-2S] cluster. Mg(2+) serves as cofactor.

The catalysed reaction is (2R)-2,3-dihydroxy-3-methylbutanoate = 3-methyl-2-oxobutanoate + H2O. It carries out the reaction (2R,3R)-2,3-dihydroxy-3-methylpentanoate = (S)-3-methyl-2-oxopentanoate + H2O. Its pathway is amino-acid biosynthesis; L-isoleucine biosynthesis; L-isoleucine from 2-oxobutanoate: step 3/4. It participates in amino-acid biosynthesis; L-valine biosynthesis; L-valine from pyruvate: step 3/4. Its function is as follows. Functions in the biosynthesis of branched-chain amino acids. Catalyzes the dehydration of (2R,3R)-2,3-dihydroxy-3-methylpentanoate (2,3-dihydroxy-3-methylvalerate) into 2-oxo-3-methylpentanoate (2-oxo-3-methylvalerate) and of (2R)-2,3-dihydroxy-3-methylbutanoate (2,3-dihydroxyisovalerate) into 2-oxo-3-methylbutanoate (2-oxoisovalerate), the penultimate precursor to L-isoleucine and L-valine, respectively. The protein is Dihydroxy-acid dehydratase of Cellvibrio japonicus (strain Ueda107) (Pseudomonas fluorescens subsp. cellulosa).